The following is an 804-amino-acid chain: Leucine--tRNA ligase (804 aa).

A 'HIGH' region motif is present at residues 40-51 (PYPSGAGLHVGH). The 'KMSKS' region signature appears at 576–580 (KMSKS). K579 contributes to the ATP binding site.

It belongs to the class-I aminoacyl-tRNA synthetase family.

The protein localises to the cytoplasm. It catalyses the reaction tRNA(Leu) + L-leucine + ATP = L-leucyl-tRNA(Leu) + AMP + diphosphate. The polypeptide is Leucine--tRNA ligase (Staphylococcus saprophyticus subsp. saprophyticus (strain ATCC 15305 / DSM 20229 / NCIMB 8711 / NCTC 7292 / S-41)).